The chain runs to 156 residues: ATP synthase subunit b (156 aa).

The helical transmembrane segment at 11–31 (AIAFILFVAFCMKYVWPPLMA) threads the bilayer.

It belongs to the ATPase B chain family. As to quaternary structure, F-type ATPases have 2 components, F(1) - the catalytic core - and F(0) - the membrane proton channel. F(1) has five subunits: alpha(3), beta(3), gamma(1), delta(1), epsilon(1). F(0) has three main subunits: a(1), b(2) and c(10-14). The alpha and beta chains form an alternating ring which encloses part of the gamma chain. F(1) is attached to F(0) by a central stalk formed by the gamma and epsilon chains, while a peripheral stalk is formed by the delta and b chains.

The protein localises to the cell inner membrane. Functionally, f(1)F(0) ATP synthase produces ATP from ADP in the presence of a proton or sodium gradient. F-type ATPases consist of two structural domains, F(1) containing the extramembraneous catalytic core and F(0) containing the membrane proton channel, linked together by a central stalk and a peripheral stalk. During catalysis, ATP synthesis in the catalytic domain of F(1) is coupled via a rotary mechanism of the central stalk subunits to proton translocation. Its function is as follows. Component of the F(0) channel, it forms part of the peripheral stalk, linking F(1) to F(0). The polypeptide is ATP synthase subunit b (Erwinia tasmaniensis (strain DSM 17950 / CFBP 7177 / CIP 109463 / NCPPB 4357 / Et1/99)).